Reading from the N-terminus, the 210-residue chain is uncharacterized protein (210 aa).

6 consecutive transmembrane segments (helical) span residues 9 to 29 (WVVTGLFVLTAAECGLAIIAK), 35 to 55 (LIVNHGLHFAMAVAMAVMAWP), 64 to 84 (GPAVFFLLAAVWFGATAVVAV), 91 to 111 (GLYGYHGLMMLATAWMYAAMN), 149 to 169 (IWFSAVNWIGTVGFAVAAVFW), and 190 to 210 (IGQAMMAAGMAMLFFAMLFPV).

It localises to the cell membrane. This is an uncharacterized protein from Mycobacterium bovis (strain ATCC BAA-935 / AF2122/97).